The sequence spans 206 residues: Large ribosomal subunit protein uL4 (206 aa).

Residues 63-93 (MYKQKGTGRARHHSARAPQFRGGGKAHGPVV) are disordered. Over residues 64–77 (YKQKGTGRARHHSA) the composition is skewed to basic residues.

The protein belongs to the universal ribosomal protein uL4 family. As to quaternary structure, part of the 50S ribosomal subunit.

Its function is as follows. One of the primary rRNA binding proteins, this protein initially binds near the 5'-end of the 23S rRNA. It is important during the early stages of 50S assembly. It makes multiple contacts with different domains of the 23S rRNA in the assembled 50S subunit and ribosome. Functionally, forms part of the polypeptide exit tunnel. The chain is Large ribosomal subunit protein uL4 from Sinorhizobium fredii (strain NBRC 101917 / NGR234).